Here is a 385-residue protein sequence, read N- to C-terminus: Exopolygalacturonase rpg15 (385 aa).

The first 26 residues, 1-26, serve as a signal peptide directing secretion; it reads MVRFISFTSPIAALLLLSFGVKHAST. Residues asparagine 143, asparagine 161, asparagine 164, and asparagine 180 are each glycosylated (N-linked (GlcNAc...) asparagine). PbH1 repeat units lie at residues 165-195, 196-217, 219-241, and 249-270; these read STNL…DLYH, SSGI…AIKE, VEKV…GSLG, and VKHV…RVKT. Residue aspartate 210 is the Proton donor of the active site. A disulfide bridge links cysteine 212 with cysteine 229. N-linked (GlcNAc...) asparagine glycosylation occurs at asparagine 226. The active site involves histidine 233. N-linked (GlcNAc...) asparagine glycosylation is found at asparagine 256, asparagine 319, and asparagine 343. A disulfide bond links cysteine 344 and cysteine 350. The PbH1 5 repeat unit spans residues 350 to 376; the sequence is CSDITFSGIDITKASNTTDNVCVYLEG. The N-linked (GlcNAc...) asparagine glycan is linked to asparagine 365.

The protein belongs to the glycosyl hydrolase 28 family. In terms of processing, N-glycosylated.

The protein resides in the secreted. It catalyses the reaction [(1-&gt;4)-alpha-D-galacturonosyl](n) + H2O = alpha-D-galacturonate + [(1-&gt;4)-alpha-D-galacturonosyl](n-1). Its function is as follows. Specific in hydrolyzing the terminal glycosidic bond of polygalacturonic acid and oligogalacturonates. The polypeptide is Exopolygalacturonase rpg15 (Rhizopus delemar (strain RA 99-880 / ATCC MYA-4621 / FGSC 9543 / NRRL 43880) (Mucormycosis agent)).